The following is a 308-amino-acid chain: Olfactory receptor 8D1 (308 aa).

Residues 1 to 25 (MTMENYSMAAQFVLDGLTQQAELQL) are Extracellular-facing. Asparagine 5 is a glycosylation site (N-linked (GlcNAc...) asparagine). The chain crosses the membrane as a helical span at residues 26–46 (PLFLLFLGIYVVTVVGNLGMI). Residues 47–54 (LLIAVSPL) are Cytoplasmic-facing. Residues 55-75 (LHTPMYYFLSSLSFVDFCYSS) form a helical membrane-spanning segment. Residues 76–99 (VITPKMLVNFLGKKNTILYSECMV) are Extracellular-facing. A disulfide bridge connects residues cysteine 97 and cysteine 189. The chain crosses the membrane as a helical span at residues 100–120 (QLFFFVVFVVAEGYLLTAMAY). The Cytoplasmic segment spans residues 121–139 (DRYVAICSPLLYNAIMSSW). A helical membrane pass occupies residues 140–160 (VCSLLVLAAFFLGFLSALTHT). Residues 161-197 (SAMMKLSFCKSHIINHYFCDVLPLLNLSCSNTHLNEL) are Extracellular-facing. The N-linked (GlcNAc...) asparagine glycan is linked to asparagine 186. The helical transmembrane segment at 198-217 (LLFIIAGFNTLVPTLAVAVS) threads the bilayer. The Cytoplasmic segment spans residues 218–237 (YAFILYSILHIRSSEGRSKA). The chain crosses the membrane as a helical span at residues 238–258 (FGTCSSHLMAVVIFFGSITFM). At 259–271 (YFKPPSSNSLDQE) the chain is on the extracellular side. Residues 272 to 292 (KVSSVFYTTVIPMLNPLIYSL) traverse the membrane as a helical segment. Over 293–308 (RNKDVKKALRKVLVGK) the chain is Cytoplasmic.

The protein belongs to the G-protein coupled receptor 1 family. As to expression, expressed in the tongue.

Its subcellular location is the cell membrane. Functionally, odorant receptor (Potential). May be involved in taste perception. This is Olfactory receptor 8D1 (OR8D1) from Homo sapiens (Human).